A 66-amino-acid chain; its full sequence is Large ribosomal subunit protein bL35 (66 aa).

Residues 19–45 (SGKVVAAQSTKRHGMTKRSKRSLRTRR) form a disordered region. The span at 28–45 (TKRHGMTKRSKRSLRTRR) shows a compositional bias: basic residues.

The protein belongs to the bacterial ribosomal protein bL35 family.

In Anaplasma phagocytophilum (strain HZ), this protein is Large ribosomal subunit protein bL35.